Here is a 377-residue protein sequence, read N- to C-terminus: Flap endonuclease 1 (377 aa).

Residues 1-104 form an N-domain region; sequence MGIQGLAKLL…GELAKRTERR (104 aa). Asp34 lines the Mg(2+) pocket. Arg47 and Arg70 together coordinate DNA. Asp86, Glu158, Glu160, Asp179, and Asp181 together coordinate Mg(2+). The segment at 122–253 is I-domain; that stretch reads NIDKFSRRLV…KRSVDLIRQH (132 aa). Glu158 serves as a coordination point for DNA. Positions 231 and 233 each coordinate DNA. Asp233 serves as a coordination point for Mg(2+). An interaction with PCNA region spans residues 336–344; sequence TQGRLDSFF. Positions 337–377 are disordered; the sequence is QGRLDSFFKVLPSPANKRKLQDGKGSQNKKAKTGGKFKRPK. Residues 363–377 are compositionally biased toward basic residues; the sequence is QNKKAKTGGKFKRPK.

This sequence belongs to the XPG/RAD2 endonuclease family. FEN1 subfamily. Interacts with PCNA. Three molecules of FEN1 bind to one PCNA trimer with each molecule binding to one PCNA monomer. PCNA stimulates the nuclease activity without altering cleavage specificity. The cofactor is Mg(2+). In terms of processing, phosphorylated. Phosphorylation upon DNA damage induces relocalization to the nuclear plasma.

It localises to the nucleus. The protein localises to the nucleolus. The protein resides in the nucleoplasm. Its subcellular location is the mitochondrion. Its function is as follows. Structure-specific nuclease with 5'-flap endonuclease and 5'-3' exonuclease activities involved in DNA replication and repair. During DNA replication, cleaves the 5'-overhanging flap structure that is generated by displacement synthesis when DNA polymerase encounters the 5'-end of a downstream Okazaki fragment. It enters the flap from the 5'-end and then tracks to cleave the flap base, leaving a nick for ligation. Also involved in the long patch base excision repair (LP-BER) pathway, by cleaving within the apurinic/apyrimidinic (AP) site-terminated flap. Acts as a genome stabilization factor that prevents flaps from equilibrating into structures that lead to duplications and deletions. Also possesses 5'-3' exonuclease activity on nicked or gapped double-stranded DNA, and exhibits RNase H activity. Also involved in replication and repair of rDNA and in repairing mitochondrial DNA. This is Flap endonuclease 1 from Nematostella vectensis (Starlet sea anemone).